The sequence spans 764 residues: 5-methyltetrahydropteroyltriglutamate--homocysteine methyltransferase (764 aa).

5-methyltetrahydropteroyltri-L-glutamate is bound by residues 16 to 19 (RELK) and K115. L-homocysteine-binding positions include 435-437 (IGS) and E488. Residues 435 to 437 (IGS) and E488 contribute to the L-methionine site. Residues 519 to 520 (RC) and W565 each bind 5-methyltetrahydropteroyltri-L-glutamate. Residue D603 participates in L-homocysteine binding. D603 serves as a coordination point for L-methionine. Residue E609 participates in 5-methyltetrahydropteroyltri-L-glutamate binding. Residues H645, C647, and E669 each coordinate Zn(2+). H698 serves as the catalytic Proton donor. C730 lines the Zn(2+) pocket.

This sequence belongs to the vitamin-B12 independent methionine synthase family. Zn(2+) is required as a cofactor.

It catalyses the reaction 5-methyltetrahydropteroyltri-L-glutamate + L-homocysteine = tetrahydropteroyltri-L-glutamate + L-methionine. It functions in the pathway amino-acid biosynthesis; L-methionine biosynthesis via de novo pathway; L-methionine from L-homocysteine (MetE route): step 1/1. Catalyzes the transfer of a methyl group from 5-methyltetrahydrofolate to homocysteine resulting in methionine formation. The protein is 5-methyltetrahydropteroyltriglutamate--homocysteine methyltransferase of Burkholderia pseudomallei (strain 1106a).